A 420-amino-acid chain; its full sequence is Exodeoxyribonuclease 7 large subunit (420 aa).

This sequence belongs to the XseA family. In terms of assembly, heterooligomer composed of large and small subunits.

It localises to the cytoplasm. It catalyses the reaction Exonucleolytic cleavage in either 5'- to 3'- or 3'- to 5'-direction to yield nucleoside 5'-phosphates.. Bidirectionally degrades single-stranded DNA into large acid-insoluble oligonucleotides, which are then degraded further into small acid-soluble oligonucleotides. This Helicobacter pylori (strain ATCC 700392 / 26695) (Campylobacter pylori) protein is Exodeoxyribonuclease 7 large subunit.